A 157-amino-acid polypeptide reads, in one-letter code: Large ribosomal subunit protein uL15 (157 aa).

Residues 1-56 (MRLEDIRPQPGSTRRRRRLGRGIAAGQGASCGKGMRGQKARKGGGPRPGFEGGQTP) are disordered. A compositionally biased stretch (gly residues) spans 23–35 (IAAGQGASCGKGM).

The protein belongs to the universal ribosomal protein uL15 family. In terms of assembly, part of the 50S ribosomal subunit.

Its function is as follows. Binds to the 23S rRNA. The sequence is that of Large ribosomal subunit protein uL15 from Synechococcus sp. (strain JA-3-3Ab) (Cyanobacteria bacterium Yellowstone A-Prime).